Reading from the N-terminus, the 316-residue chain is Transaldolase (316 aa).

The Schiff-base intermediate with substrate role is filled by lysine 131.

This sequence belongs to the transaldolase family. Type 1 subfamily. Homodimer.

It localises to the cytoplasm. The enzyme catalyses D-sedoheptulose 7-phosphate + D-glyceraldehyde 3-phosphate = D-erythrose 4-phosphate + beta-D-fructose 6-phosphate. It participates in carbohydrate degradation; pentose phosphate pathway; D-glyceraldehyde 3-phosphate and beta-D-fructose 6-phosphate from D-ribose 5-phosphate and D-xylulose 5-phosphate (non-oxidative stage): step 2/3. In terms of biological role, transaldolase is important for the balance of metabolites in the pentose-phosphate pathway. The sequence is that of Transaldolase from Sodalis glossinidius (strain morsitans).